The following is a 185-amino-acid chain: MKSEKEKTSKKSAVLDWAKAIIIAVVLAVLIRNFLFAPYVVDGESMEPTLHDRERIFVNMTVKYISDFKRGQIVVLNGENEHYVKRIIGLPGDTVQMKNDQLYINGKKVSEPYLAANKKKAKQDGYTLTDDFGPVKVPDDKYFVMGDNRRNSMDSRNGLGLFTKKQIAGTSKFVFFPFNEIRKTK.

Residues 1 to 20 lie on the Cytoplasmic side of the membrane; that stretch reads MKSEKEKTSKKSAVLDWAKA. Residues 21–41 traverse the membrane as a helical segment; that stretch reads IIIAVVLAVLIRNFLFAPYVV. Residues 42–185 are Extracellular-facing; it reads DGESMEPTLH…FPFNEIRKTK (144 aa). Catalysis depends on residues S45 and K85.

This sequence belongs to the peptidase S26 family.

It is found in the cell membrane. The enzyme catalyses Cleavage of hydrophobic, N-terminal signal or leader sequences from secreted and periplasmic proteins.. The protein is Signal peptidase I (sipA) of Bacillus amyloliquefaciens (Bacillus velezensis).